The chain runs to 344 residues: AA9 family lytic polysaccharide monooxygenase cel61A (344 aa).

Positions 1-21 are cleaved as a signal peptide; it reads MIQKLSNLLVTALAVATGVVG. Residue His22 participates in Cu(2+) binding. Cystine bridges form between Cys77–Cys198 and Cys118–Cys122. Residue Asn80 is glycosylated (N-linked (GlcNAc...) asparagine). His107 contacts Cu(2+). A glycan (N-linked (GlcNAc...) asparagine) is linked at Asn158. O2-binding residues include His184 and Gln193. Tyr195 contributes to the Cu(2+) binding site. Residues 262–310 are disordered; sequence ATASATVPGGGSGPTSRTTTTARTTQASSRPSSTPPATTSAPAGGPTQT. The segment covering 275-310 has biased composition (low complexity); the sequence is PTSRTTTTARTTQASSRPSSTPPATTSAPAGGPTQT. One can recognise a CBM1 domain in the interval 307–343; it reads PTQTLYGQCGGSGYSGPTRCAPPATCSTLNPYYAQCL.

It belongs to the polysaccharide monooxygenase AA9 family. The cofactor is Cu(2+).

Its subcellular location is the secreted. It catalyses the reaction [(1-&gt;4)-beta-D-glucosyl]n+m + reduced acceptor + O2 = 4-dehydro-beta-D-glucosyl-[(1-&gt;4)-beta-D-glucosyl]n-1 + [(1-&gt;4)-beta-D-glucosyl]m + acceptor + H2O.. Functionally, lytic polysaccharide monooxygenase (LPMO) that depolymerizes crystalline and amorphous polysaccharides via the oxidation of scissile alpha- or beta-(1-4)-glycosidic bonds, yielding C1 or C4 oxidation products. Catalysis by LPMOs requires the reduction of the active-site copper from Cu(II) to Cu(I) by a reducing agent and H(2)O(2) or O(2) as a cosubstrate. Shows activity on beta-glucan and amorphous cellulose. Does not show beta-1-3-glucanase, beta-1,6-glucanase, mannanase, xylanase, beta-1,3-galactosidase, amylase, pectinase, nor chitinase activities. The chain is AA9 family lytic polysaccharide monooxygenase cel61A from Hypocrea jecorina (Trichoderma reesei).